The following is a 160-amino-acid chain: Large ribosomal subunit protein uL11 (160 aa).

Belongs to the universal ribosomal protein uL11 family. Part of the ribosomal stalk of the 50S ribosomal subunit. Interacts with L10 and the large rRNA to form the base of the stalk. L10 forms an elongated spine to which L12 dimers bind in a sequential fashion forming a multimeric L10(L12)X complex.

Functionally, forms part of the ribosomal stalk which helps the ribosome interact with GTP-bound translation factors. This is Large ribosomal subunit protein uL11 from Methanococcus aeolicus (strain ATCC BAA-1280 / DSM 17508 / OCM 812 / Nankai-3).